Here is an 86-residue protein sequence, read N- to C-terminus: Dynein light chain 1, cytoplasmic (86 aa).

Belongs to the dynein light chain family. In terms of assembly, homodimer. Cytoplasmic dynein consists of two catalytic heavy chains (HCs) and a number of non-catalytic subunits which present intermediate chains (ICs), light intermediate chains (LICs) and light chains (LCs). Component of the nuclear pore complex (NPC). NPC constitutes the exclusive means of nucleocytoplasmic transport. NPCs allow the passive diffusion of ions and small molecules and the active, nuclear transport receptor-mediated bidirectional transport of macromolecules such as proteins, RNAs, ribonucleoparticles (RNPs), and ribosomal subunits across the nuclear envelope. Due to its 8-fold rotational symmetry, all subunits are present with 8 copies or multiples thereof.

Its subcellular location is the cytoplasm. The protein resides in the cytoskeleton. It localises to the nucleus. It is found in the nuclear pore complex. Acts as one of several non-catalytic accessory components of the cytoplasmic dynein complex that are thought to be involved in linking dynein to cargos and to adapter proteins that regulate dynein function. Cytoplasmic dynein 1 acts as a motor for the intracellular retrograde motility of vesicles and organelles along microtubules. May play a role in changing or maintaining the spatial distribution of cytoskeletal structures. Also a component of the nuclear pore complex. The polypeptide is Dynein light chain 1, cytoplasmic (DYN2) (Candida glabrata (strain ATCC 2001 / BCRC 20586 / JCM 3761 / NBRC 0622 / NRRL Y-65 / CBS 138) (Yeast)).